Consider the following 360-residue polypeptide: Small ribosomal subunit protein mS22 (360 aa).

S54 is modified (phosphoserine). An N6-acetyllysine modification is found at K211.

It belongs to the mitochondrion-specific ribosomal protein mS22 family. In terms of assembly, component of the mitochondrial small ribosomal subunit (mt-SSU). Mature mammalian 55S mitochondrial ribosomes consist of a small (28S) and a large (39S) subunit. The 28S small subunit contains a 12S ribosomal RNA (12S mt-rRNA) and 30 different proteins. The 39S large subunit contains a 16S rRNA (16S mt-rRNA), a copy of mitochondrial valine transfer RNA (mt-tRNA(Val)), which plays an integral structural role, and 52 different proteins.

It is found in the mitochondrion. The protein is Small ribosomal subunit protein mS22 (MRPS22) of Homo sapiens (Human).